A 219-amino-acid chain; its full sequence is uncharacterized protein (219 aa).

The signal sequence occupies residues 1–17; that stretch reads MFKKIIILFLGIFLLSS. A lipid anchor (N-palmitoyl cysteine) is attached at cysteine 18. Cysteine 18 is lipidated: S-diacylglycerol cysteine. A disordered region spans residues 110–136; the sequence is KAESNATQSNNDMTLSKANKKVRKDDS. A compositionally biased stretch (polar residues) spans 112–126; it reads ESNATQSNNDMTLSK. Positions 137–165 form a coiled coil; it reads YKEKKIEEELNQIKAMLRETKRDITKYTC.

The protein resides in the cell membrane. This is an uncharacterized protein from Rickettsia prowazekii (strain Madrid E).